Reading from the N-terminus, the 36-residue chain is Endoglucanase Cel12A (36 aa).

It belongs to the glycosyl hydrolase 12 (cellulase H) family.

The protein resides in the secreted. It is found in the extracellular space. It catalyses the reaction Endohydrolysis of (1-&gt;4)-beta-D-glucosidic linkages in cellulose, lichenin and cereal beta-D-glucans.. Its function is as follows. Has carboxymethylcellulase activity. The polypeptide is Endoglucanase Cel12A (Gloeophyllum trabeum (Brown rot fungus)).